The primary structure comprises 505 residues: MSFRINPLNAIDFYKADHRRQYPEGTEYVYANFTPRSSRLANMLHDFDDKIVFFGLQGFIQHFLIETWNEGFFNQDKATVVSHYKRRMDTSLGEGAVSVEHIEALHDLGYLPLKIKALPEGSRVNMRVPVLTVINTQAEFFWLTNYIETVLSAELWKSSTTATIAFEYKRLLTQYAVKTGASIENVVVQGHDFSSRGMSGIYDAAQSGVGHLTSFIGTDAVTAIDYAEQYYAASGVVGVSVPATEHSVMCMGSEENELETFRRLICELYPSGIVSIVSDTWDFWRVLSEFSVKLKQDILNRTPNALGLAKVVFRPDSGDPVKIICGDPDAEKDTPAYKGAVQLLWEIFGGTYTAQGYKVLHERVGLIYGDSITLQRAEAILQGLEAQGFASSNLVFGIGSYTYNYMTRDTFGFAVKATWGQVNGVGRELFKDPVTDSGTKKSAQGLLRVERSQDGFTLFDRQSKQQENQGELHTVFENGQLCLKSTLDEIRQRLAQQLESFKDSN.

Arginine 196 provides a ligand contact to diphosphate. Aspartate 219 provides a ligand contact to beta-nicotinamide D-ribonucleotide. Positions 246 and 314 each coordinate diphosphate. Residues 314-316 (RPD), 369-370 (GD), and arginine 408 each bind beta-nicotinamide D-ribonucleotide.

This sequence belongs to the NAPRTase family.

The enzyme catalyses beta-nicotinamide D-ribonucleotide + diphosphate = 5-phospho-alpha-D-ribose 1-diphosphate + nicotinamide + H(+). The protein operates within cofactor biosynthesis; NAD(+) biosynthesis; nicotinamide D-ribonucleotide from 5-phospho-alpha-D-ribose 1-diphosphate and nicotinamide: step 1/1. With respect to regulation, 10-fold more active in the presence of saturating ATP. Functionally, catalyzes the condensation of nicotinamide with 5-phosphoribosyl-1-pyrophosphate to yield nicotinamide mononucleotide, an intermediate in the biosynthesis of NAD. Functions in the nondeamidating salvage pathway for production of NAD from nicotinamide. Displays a strict preference for nicotinamide over nicotinate substrate. The polypeptide is Nicotinamide phosphoribosyltransferase (Acinetobacter baylyi (strain ATCC 33305 / BD413 / ADP1)).